We begin with the raw amino-acid sequence, 529 residues long: Bifunctional purine biosynthesis protein PurH (529 aa).

The region spanning 1-148 is the MGS-like domain; sequence MTNRNVIKNV…KNYKNVLVVT (148 aa).

This sequence belongs to the PurH family.

The catalysed reaction is (6R)-10-formyltetrahydrofolate + 5-amino-1-(5-phospho-beta-D-ribosyl)imidazole-4-carboxamide = 5-formamido-1-(5-phospho-D-ribosyl)imidazole-4-carboxamide + (6S)-5,6,7,8-tetrahydrofolate. It catalyses the reaction IMP + H2O = 5-formamido-1-(5-phospho-D-ribosyl)imidazole-4-carboxamide. The protein operates within purine metabolism; IMP biosynthesis via de novo pathway; 5-formamido-1-(5-phospho-D-ribosyl)imidazole-4-carboxamide from 5-amino-1-(5-phospho-D-ribosyl)imidazole-4-carboxamide (10-formyl THF route): step 1/1. It participates in purine metabolism; IMP biosynthesis via de novo pathway; IMP from 5-formamido-1-(5-phospho-D-ribosyl)imidazole-4-carboxamide: step 1/1. In Buchnera aphidicola subsp. Baizongia pistaciae (strain Bp), this protein is Bifunctional purine biosynthesis protein PurH.